We begin with the raw amino-acid sequence, 303 residues long: Ribosomal RNA small subunit methyltransferase A (303 aa).

Residues Met-1–Ser-19 show a composition bias toward low complexity. A disordered region spans residues Met-1–Leu-34. Positions 55, 57, 82, 104, 130, and 149 each coordinate S-adenosyl-L-methionine.

This sequence belongs to the class I-like SAM-binding methyltransferase superfamily. rRNA adenine N(6)-methyltransferase family. RsmA subfamily.

It localises to the cytoplasm. The catalysed reaction is adenosine(1518)/adenosine(1519) in 16S rRNA + 4 S-adenosyl-L-methionine = N(6)-dimethyladenosine(1518)/N(6)-dimethyladenosine(1519) in 16S rRNA + 4 S-adenosyl-L-homocysteine + 4 H(+). In terms of biological role, specifically dimethylates two adjacent adenosines (A1518 and A1519) in the loop of a conserved hairpin near the 3'-end of 16S rRNA in the 30S particle. May play a critical role in biogenesis of 30S subunits. This Gluconobacter oxydans (strain 621H) (Gluconobacter suboxydans) protein is Ribosomal RNA small subunit methyltransferase A.